A 526-amino-acid polypeptide reads, in one-letter code: Rho guanine nucleotide exchange factor 3 (526 aa).

Residues 20–40 form a disordered region; sequence ELPPASGPAKDAEEPSNKRVK. Phosphoserine is present on residues serine 47 and serine 70. One can recognise a DH domain in the interval 122–304; it reads KRQEAIFELS…QGIVAEINTK (183 aa). Residues 291 to 449 enclose the PH domain; that stretch reads INIIQGIVAE…WLNCIRQAKE (159 aa). The tract at residues 464–526 is disordered; the sequence is EGSFLNPTTG…GNSRHGESNV (63 aa). Residues 466–475 are compositionally biased toward polar residues; that stretch reads SFLNPTTGSR.

In terms of assembly, interacts with RHOA and RHOB. Widely expressed. Highest levels are found in adult brain and skeletal muscle. Lower levels are found in heart and kidney.

It is found in the cytoplasm. Functionally, acts as a guanine nucleotide exchange factor (GEF) for RhoA and RhoB GTPases. This chain is Rho guanine nucleotide exchange factor 3 (ARHGEF3), found in Homo sapiens (Human).